The chain runs to 227 residues: Glutathione S-transferase U27 (227 aa).

A GST N-terminal domain is found at 4-84; the sequence is EEVVVLNFWP…YIDEVWKDDK (81 aa). Residues 14 to 15, 41 to 42, 55 to 56, and 68 to 69 contribute to the glutathione site; these read SM, QK, KI, and ES. A GST C-terminal domain is found at 92 to 217; that stretch reads DPYQKSQCRF…LKIFDRVTQI (126 aa).

This sequence belongs to the GST superfamily. Tau family.

The protein localises to the cytoplasm. It localises to the cytosol. It carries out the reaction RX + glutathione = an S-substituted glutathione + a halide anion + H(+). Functionally, may be involved in the conjugation of reduced glutathione to a wide number of exogenous and endogenous hydrophobic electrophiles and have a detoxification role against certain herbicides. This Arabidopsis thaliana (Mouse-ear cress) protein is Glutathione S-transferase U27 (GSTU27).